The primary structure comprises 145 residues: Leghemoglobin-1 (145 aa).

In terms of domain architecture, Globin spans 3-145 (AFSDKQEALV…ELAAAIKKAY (143 aa)). Nitrated tyrosine occurs at positions 26 and 31. Serine 46 contributes to the heme b binding site. Serine 46 bears the Phosphoserine mark. Histidine 62 contributes to the O2 binding site. The heme b site is built by lysine 65, histidine 93, and lysine 96. The residue at position 134 (tyrosine 134) is a Nitrated tyrosine.

It belongs to the plant globin family. Monomer. Nitrated in effective nodules and particularly in hypoxic conditions; this mechanism may play a protective role in the symbiosis by buffering toxic peroxynitrite NO(2)(-). Nitration level decrease during nodule senescence. In terms of processing, phosphorylation at Ser-46 disrupts the molecular environment of its porphyrin ring oxygen binding pocket, thus leading to a reduced oxygen consumption and to the delivery of oxygen O(2) to symbiosomes. As to expression, root nodules.

The protein resides in the cytoplasm. It localises to the cytosol. Its subcellular location is the nucleus. Functionally, leghemoglobin that reversibly binds oxygen O(2) through a pentacoordinated heme iron. In root nodules, facilitates the diffusion of oxygen to the bacteroids while preventing the bacterial nitrogenase from being inactivated by buffering dioxygen, nitric oxide and carbon monoxide, and promoting the formation of reactive oxygen species (ROS, e.g. H(2)O(2)). This role is essential for symbiotic nitrogen fixation (SNF). The chain is Leghemoglobin-1 from Vigna unguiculata (Cowpea).